A 1239-amino-acid polypeptide reads, in one-letter code: Zinc finger and BTB domain-containing protein 40 (1239 aa).

One can recognise a BTB domain in the interval 24–87 (CDCTISIGTI…MYTGKLPVGK (64 aa)). 3 disordered regions span residues 130–231 (SAPS…TSTE), 687–732 (HLEA…PDPA), and 779–801 (KELDKHQLEAHGAGGEPDAPKKK). The span at 136–145 (TFRKEPEKPQ) shows a compositional bias: basic and acidic residues. The span at 181 to 199 (SVSQEMSVNSPTAQESQRN) shows a compositional bias: polar residues. Ser190 is subject to Phosphoserine. Positions 200–212 (AETPAETPTTAEA) are enriched in low complexity. Basic and acidic residues predominate over residues 687–703 (HLEANNKEDEKAAKEDS). Phosphoserine is present on Ser703. The segment covering 705 to 719 (PGEQNDQGETGSLPG) has biased composition (polar residues). 10 C2H2-type zinc fingers span residues 807–830 (VTCDLCGREFAHASGMQYHKLTEH), 836–858 (FSCEECGAKFAANSTLKNHLRLH), 864–887 (FMCKHCLMTFTQASALAYHTKKKH), 893–915 (YACQYCDAVFAQSIELSRHVRTH), 921–944 (YVCRDCGKGFRQANGLSIHLHTFH), 950–973 (YDCKKCRMSFPTLQDHRKHIHEVH), 978–1000 (HPCPTCGKIFSAPSMLERHVVTH), 1006–1029 (FSCGICNKAYQQLSGLWYHNRTHH), 1046–1069 (LQCSSCDKTFPNTIEHKKHIKAEH), and 1075–1098 (HECDQCKELFPTPALLQVHVKCQH). Residue Lys1066 forms a Glycyl lysine isopeptide (Lys-Gly) (interchain with G-Cter in SUMO2) linkage. Residues 1104 to 1127 (FRCLYCAATFRFPGALQHHVTTEH) form a C2H2-type 11; atypical zinc finger. A C2H2-type 12 zinc finger spans residues 1135–1158 (FPCELCGELFTSQAQLDSHLESEH).

Belongs to the krueppel C2H2-type zinc-finger protein family.

The protein resides in the nucleus. Its function is as follows. May be involved in transcriptional regulation. The sequence is that of Zinc finger and BTB domain-containing protein 40 (ZBTB40) from Homo sapiens (Human).